The chain runs to 401 residues: ADP-forming sulfoacetate-CoA ligase subunit SqwK (401 aa).

The ATP-grasp domain occupies 9–217; that stretch reads KTVFSEHKIP…DNSVFRQPRF (209 aa). Residue 35–96 coordinates ATP; sequence KSVGFPSVVK…EEAVHIDKEI (62 aa). Glutamate 185 and asparagine 187 together coordinate Mg(2+).

This sequence belongs to the succinate/malate CoA ligase beta subunit family. Forms a complex with SqwL. Mg(2+) serves as cofactor.

It catalyses the reaction sulfoacetate + ATP + CoA = sulfoacetyl-CoA + ADP + phosphate. Its function is as follows. Part of a variant of the sulfo-TK pathway, a D-sulfoquinovose degradation pathway that produces sulfoacetate. Hydrolyzes sulfoacetyl-coenzyme A (sulfoacetyl-CoA) to produce sulfoacetate and CoA coupled with the phosphorylation of ADP to generate ATP. Cannot use succinate, acetate or 3-hydroxypropionate, and shows only residual activities with malonate and 3-sulfopropanoate. This is ADP-forming sulfoacetate-CoA ligase subunit SqwK from Acholeplasma sp.